A 343-amino-acid polypeptide reads, in one-letter code: Sodium/bile acid cotransporter 7 (343 aa).

The Cytoplasmic portion of the chain corresponds to 1 to 10 (MGLLERLRKE). Residues 11 to 31 (WFIVGIILVIAAAKLEPTIGG) traverse the membrane as a helical segment. Over 32–37 (KGGPLK) the chain is Extracellular. Residues 38–58 (PEITITYIAVSAIFFNSGLSL) form a helical membrane-spanning segment. Over 59 to 71 (KTEELTNALMHVK) the chain is Cytoplasmic. A helical transmembrane segment spans residues 72–92 (LHLFVQLFTLVFFPTAIWVFL). Residues 93–116 (QVLSLTPINEWLLKGLQTVSCMPP) are Extracellular-facing. A helical membrane pass occupies residues 117–137 (PVSSAVILTKAVGGNEAAAIF). Residue Asn-138 is a topological domain, cytoplasmic. Residues 139-159 (SAFGSFLGIVVTPLLLLLFLG) form a helical membrane-spanning segment. Residues 160–163 (SSSS) lie on the Extracellular side of the membrane. A helical transmembrane segment spans residues 164–184 (VPFTSIFSQLFMTVVVPLIIG). The Cytoplasmic segment spans residues 185 to 201 (QIVRRYIKDWLERKKPP). Residues 202–222 (FGAISSCVLLMIIYTTFCDTF) form a helical membrane-spanning segment. Residues 223 to 234 (SNPNIDLDTFSL) lie on the Extracellular side of the membrane. A helical membrane pass occupies residues 235 to 255 (VIIVFIIFFIQLAFMLLTFLF). At 256–270 (STSKNTGFTPADTVA) the chain is on the cytoplasmic side. The helical transmembrane segment at 271 to 291 (IVFCSTHKSLTLGIPMLKIVF) threads the bilayer. The Extracellular portion of the chain corresponds to 292–298 (AGYEHLS). A helical membrane pass occupies residues 299–319 (LISVPLLIYHPAQILLGSVLV). Topologically, residues 320–343 (PTIKSWMLSRQKALKLTRQPKVPL) are cytoplasmic.

The protein belongs to the bile acid:sodium symporter (BASS) (TC 2.A.28) family.

Its subcellular location is the cell membrane. It localises to the endoplasmic reticulum membrane. It is found in the golgi apparatus membrane. Functionally, involved in teeth and skeletal development. Has an essential role in the biosynthesis and trafficking of glycosaminoglycans and glycoproteins to produce a proper functioning extracellular matrix. Required for extracellular matrix mineralization. Also involved in the regulation of cellular calcium homeostasis. Does not show transport activity towards bile acids or steroid sulfates. In Xenopus tropicalis (Western clawed frog), this protein is Sodium/bile acid cotransporter 7 (slc10a7).